Consider the following 234-residue polypeptide: Leucyl/phenylalanyl-tRNA--protein transferase (234 aa).

The protein belongs to the L/F-transferase family.

Its subcellular location is the cytoplasm. The catalysed reaction is N-terminal L-lysyl-[protein] + L-leucyl-tRNA(Leu) = N-terminal L-leucyl-L-lysyl-[protein] + tRNA(Leu) + H(+). It catalyses the reaction N-terminal L-arginyl-[protein] + L-leucyl-tRNA(Leu) = N-terminal L-leucyl-L-arginyl-[protein] + tRNA(Leu) + H(+). The enzyme catalyses L-phenylalanyl-tRNA(Phe) + an N-terminal L-alpha-aminoacyl-[protein] = an N-terminal L-phenylalanyl-L-alpha-aminoacyl-[protein] + tRNA(Phe). Functionally, functions in the N-end rule pathway of protein degradation where it conjugates Leu, Phe and, less efficiently, Met from aminoacyl-tRNAs to the N-termini of proteins containing an N-terminal arginine or lysine. The protein is Leucyl/phenylalanyl-tRNA--protein transferase of Pectobacterium atrosepticum (strain SCRI 1043 / ATCC BAA-672) (Erwinia carotovora subsp. atroseptica).